Reading from the N-terminus, the 253-residue chain is Ribonuclease HII (253 aa).

Positions 70-253 (NLIAGIDEVG…KSFEPIKSML (184 aa)) constitute an RNase H type-2 domain. Residues aspartate 76, glutamate 77, and aspartate 168 each contribute to the a divalent metal cation site.

Belongs to the RNase HII family. Mn(2+) is required as a cofactor. Requires Mg(2+) as cofactor.

Its subcellular location is the cytoplasm. It carries out the reaction Endonucleolytic cleavage to 5'-phosphomonoester.. Functionally, endonuclease that specifically degrades the RNA of RNA-DNA hybrids. The sequence is that of Ribonuclease HII from Streptococcus agalactiae serotype Ia (strain ATCC 27591 / A909 / CDC SS700).